A 2737-amino-acid chain; its full sequence is Non-reducing polyketide synthase ATEG_07661 (2737 aa).

The interval Ser-75–Val-245 is N-terminal acylcarrier protein transacylase domain (SAT). The active-site Nucleophile; for transacylase activity is Cys-154. His-276 functions as the Proton donor/acceptor; for transacylase activity in the catalytic mechanism. Residues Asn-427–Glu-854 enclose the Ketosynthase family 3 (KS3) domain. Active-site for beta-ketoacyl synthase activity residues include Cys-603, His-738, and His-777. The malonyl-CoA:ACP transacylase (MAT) stretch occupies residues Phe-969–Ser-1260. Residues Leu-1368–Asp-1503 are N-terminal hotdog fold. Positions Leu-1368–Ser-1683 constitute a PKS/mFAS DH domain. The product template (PT) domain stretch occupies residues Phe-1399–Ser-1681. The Proton acceptor; for dehydratase activity role is filled by His-1403. Residues Val-1535 to Ser-1683 are C-terminal hotdog fold. Catalysis depends on Asp-1592, which acts as the Proton donor; for dehydratase activity. A disordered region spans residues Ser-1724–Ser-1747. Positions Arg-1725–Ser-1739 are enriched in basic residues. Residues Arg-1750–Leu-1824 form the Carrier domain. The residue at position 1784 (Ser-1784) is an O-(pantetheine 4'-phosphoryl)serine. The tract at residues Pro-1827–Asp-1876 is disordered. A compositionally biased stretch (acidic residues) spans Ile-1834–Ser-1848. Over residues Asn-1849–Ser-1866 the composition is skewed to low complexity. Residues Ala-2094–Gly-2270 are methyltransferase domain. The segment at Val-2362 to Val-2665 is NADPH-binding domain.

It functions in the pathway secondary metabolite biosynthesis. Its function is as follows. Non-reducing polyketide synthase; part of the cluster B that mediates the biosynthesis of azasperpyranones, members of the azaphilone family that exhibit anti-cancer activities. Azasperpyranones are synthesized by 2 clusters, A and B. Cluster A is responsible for the production of the polyhydric phenol moiety while the azaphilonoid scaffold is produced by the cluster B. The non-reducing polyketide synthase ATEG_03629 produces 5-methyl orsellinic acid, which is then reduced to 5-methyl orsellinic aldehyde by the NRPS-like protein ATEG_03630. 5-methyl orsellinic aldehyde is then first hydroxylated by the FAD-dependent monooxygenase ATEG_03635 and subsequently hydroxylated by the cytochrome P450 monooxygenase ATEG_03631 to produce the unstable polyhydric phenol precursor of azasperpyranones. On the other hand, the polyketide synthase ATEG_07659 is responsible for producing the 3,5-dimethyloctadienone moiety from acetyl-CoA, three malonyl-CoA, and two S-adenosyl methionines (SAM). The 3,5-dimethyloctadienone moiety is then loaded onto the SAT domain of ATEG_07661 and extended with four malonyl-CoA and one SAM, which leads to the formation of 2,4-dihydroxy-6-(5,7-dimethyl-2-oxo-trans-3-trans-5-nonadienyl)-3-methylbenzaldehyde (compound 8) after reductive release and aldol condensation. The FAD-dependent monooxygenase ATEG_07662 is the next enzyme in the biosynthesis sequence and hydroxylates the side chain at the benzylic position of compound 8. In Aspergillus nidulans, afoF, the ortholog of the FAD-dependent oxygenase ATEG_07660, is the key enzyme for the biosynthesis of asperfuranone by catalyzing the hydroxylation at C-8 of to prevent the formation of a six-membered ring hemiacetal intermediate and thus facilitating the formation of a five-membered ring to produce asperfuranone. In Aspergillus terreus, ATEG_07660 is probably not functional, which leads to the formation of the six-membered ring hemiacetal intermediate presperpyranone instead of asperfuranone. Finally, ATEG_03636 is involved in the condensation of the polyhydric phenol moiety produced by cluster A and the perasperpyranone precursor produced by cluster B, to yield azasperpyranone A. Further modifications of azasperpyranone A result in the production of derivatives, including azasperpyranone B to F. This is Non-reducing polyketide synthase ATEG_07661 from Aspergillus terreus (strain NIH 2624 / FGSC A1156).